We begin with the raw amino-acid sequence, 152 residues long: MSLNQLQLSLQFARFAEAPVHRAVLSRSKVTRWIRHALAVDAEITVRIVDAEEGQQLNREYRQKDYATNVLTFDYQQEPTAMADLVLCAPVVEREAREQNKTLEEHYAHLLVHGTLHAQGWDHETSEQDAEEMEAYETEIMVELGFADPYAK.

The Zn(2+) site is built by His-113, His-117, and His-123.

The protein belongs to the endoribonuclease YbeY family. The cofactor is Zn(2+).

The protein resides in the cytoplasm. Its function is as follows. Single strand-specific metallo-endoribonuclease involved in late-stage 70S ribosome quality control and in maturation of the 3' terminus of the 16S rRNA. This is Endoribonuclease YbeY from Delftia acidovorans (strain DSM 14801 / SPH-1).